Consider the following 67-residue polypeptide: Small ribosomal subunit protein eS31 (67 aa).

4 residues coordinate Zn(2+): Cys-31, Cys-34, Cys-49, and Cys-52. Residues Cys-31–Cys-52 form a C4-type zinc finger.

The protein belongs to the eukaryotic ribosomal protein eS31 family. Part of the 30S ribosomal subunit. Requires Zn(2+) as cofactor.

This chain is Small ribosomal subunit protein eS31, found in Methanococcus maripaludis (strain DSM 14266 / JCM 13030 / NBRC 101832 / S2 / LL).